Here is a 387-residue protein sequence, read N- to C-terminus: GTPase Obg (387 aa).

Residues 1–159 form the Obg domain; that stretch reads MKFVDEAIIR…RSLKLELLLL (159 aa). Residues 160–333 form the OBG-type G domain; it reads ADVGLLGMPN…LALKLLDFID (174 aa). GTP is bound by residues 166–173, 191–195, 213–216, 283–286, and 314–316; these read GMPNAGKS, FTTLV, DIPG, NKAD, and SAY. Mg(2+)-binding residues include Ser173 and Thr193.

It belongs to the TRAFAC class OBG-HflX-like GTPase superfamily. OBG GTPase family. In terms of assembly, monomer. Mg(2+) serves as cofactor.

It is found in the cytoplasm. In terms of biological role, an essential GTPase which binds GTP, GDP and possibly (p)ppGpp with moderate affinity, with high nucleotide exchange rates and a fairly low GTP hydrolysis rate. Plays a role in control of the cell cycle, stress response, ribosome biogenesis and in those bacteria that undergo differentiation, in morphogenesis control. The polypeptide is GTPase Obg (Shewanella pealeana (strain ATCC 700345 / ANG-SQ1)).